The chain runs to 658 residues: Endoglin (658 aa).

The first 25 residues, 1–25 (MDRGTLPLAVALLLASCSLSPTSLA), serve as a signal peptide directing secretion. The segment at 26–46 (ETVHCDLQPVGPERGEVTYTT) is OR1, N-terminal part. Positions 26–337 (ETVHCDLQPV…SSCGGRLQTS (312 aa)) are required for interaction with GDF2. At 26 to 586 (ETVHCDLQPV…PDLSGCTSKG (561 aa)) the chain is on the extracellular side. Cystine bridges form between C30/C207, C53/C182, C242/C330, C350/C382, C363/C442, C394/C412, and C493/C549. Residues 47–199 (SQVSKGCVAQ…MGRTLEWRPR (153 aa)) form an OR2 region. Residues N88, N102, N121, and N134 are each glycosylated (N-linked (GlcNAc...) asparagine). Residues 200–330 (TPALVRGCHL…SIVSLHASSC (131 aa)) form an OR1, C-terminal part region. The segment at 270 to 282 (QIWTTGEYSFKIF) is essential for interaction with GDF2. The N-linked (GlcNAc...) asparagine glycan is linked to N307. A ZP domain is found at 363-533 (CADDAMTLVL…PEGDPRFSFL (171 aa)). A Cell attachment site motif is present at residues 399 to 401 (RGD). A helical transmembrane segment spans residues 587-611 (LVLPAVLGITFGAFLIGALLTAALW). Residues 612-658 (YIYSHTRSPSKREPVVAVAAPASSESSSTNHSIGSTQSTPCSTSSMA) are Cytoplasmic-facing. Residues 626-639 (VVAVAAPASSESSS) are compositionally biased toward low complexity. The interval 626–658 (VVAVAAPASSESSSTNHSIGSTQSTPCSTSSMA) is disordered. The span at 640–658 (TNHSIGSTQSTPCSTSSMA) shows a compositional bias: polar residues. A phosphoserine; by TGFBR1 mark is found at S646 and S649.

In terms of assembly, homodimer; disulfide-linked. Forms a heteromeric complex with the signaling receptors for transforming growth factor-beta: TGFBR1 and/or TGFBR2. It is able to bind TGFB1 and TGFB2 with high affinity, but not TGFB3. Interacts with GDF2, forming a heterotetramer with a 2:2 stoichiometry. Interacts with ACVRL1. Can form a heteromeric complex with GDF2 and ACVRL1. Interacts with BMP10. Interacts with DYNLT4. Interacts with ARRB2. In terms of tissue distribution, detected on umbilical veil endothelial cells. Detected in placenta (at protein level). Detected on endothelial cells.

Its subcellular location is the cell membrane. In terms of biological role, vascular endothelium glycoprotein that plays an important role in the regulation of angiogenesis. Required for normal structure and integrity of adult vasculature. Regulates the migration of vascular endothelial cells. Required for normal extraembryonic angiogenesis and for embryonic heart development. May regulate endothelial cell shape changes in response to blood flow, which drive vascular remodeling and establishment of normal vascular morphology during angiogenesis. May play a critical role in the binding of endothelial cells to integrins and/or other RGD receptors. Acts as a TGF-beta coreceptor and is involved in the TGF-beta/BMP signaling cascade that ultimately leads to the activation of SMAD transcription factors. Required for GDF2/BMP9 signaling through SMAD1 in endothelial cells and modulates TGFB1 signaling through SMAD3. This Homo sapiens (Human) protein is Endoglin (ENG).